The sequence spans 98 residues: Aspartyl/glutamyl-tRNA(Asn/Gln) amidotransferase subunit C (98 aa).

This sequence belongs to the GatC family. Heterotrimer of A, B and C subunits.

It carries out the reaction L-glutamyl-tRNA(Gln) + L-glutamine + ATP + H2O = L-glutaminyl-tRNA(Gln) + L-glutamate + ADP + phosphate + H(+). The catalysed reaction is L-aspartyl-tRNA(Asn) + L-glutamine + ATP + H2O = L-asparaginyl-tRNA(Asn) + L-glutamate + ADP + phosphate + 2 H(+). In terms of biological role, allows the formation of correctly charged Asn-tRNA(Asn) or Gln-tRNA(Gln) through the transamidation of misacylated Asp-tRNA(Asn) or Glu-tRNA(Gln) in organisms which lack either or both of asparaginyl-tRNA or glutaminyl-tRNA synthetases. The reaction takes place in the presence of glutamine and ATP through an activated phospho-Asp-tRNA(Asn) or phospho-Glu-tRNA(Gln). This chain is Aspartyl/glutamyl-tRNA(Asn/Gln) amidotransferase subunit C, found in Micrococcus luteus (strain ATCC 4698 / DSM 20030 / JCM 1464 / CCM 169 / CCUG 5858 / IAM 1056 / NBRC 3333 / NCIMB 9278 / NCTC 2665 / VKM Ac-2230) (Micrococcus lysodeikticus).